Consider the following 95-residue polypeptide: UPF0358 protein BCG9842_B1188 (95 aa).

It belongs to the UPF0358 family.

The polypeptide is UPF0358 protein BCG9842_B1188 (Bacillus cereus (strain G9842)).